The chain runs to 145 residues: D-aminoacyl-tRNA deacylase (145 aa).

The Gly-cisPro motif, important for rejection of L-amino acids motif lies at 137–138 (GP).

It belongs to the DTD family. In terms of assembly, homodimer.

It is found in the cytoplasm. The enzyme catalyses glycyl-tRNA(Ala) + H2O = tRNA(Ala) + glycine + H(+). It carries out the reaction a D-aminoacyl-tRNA + H2O = a tRNA + a D-alpha-amino acid + H(+). Functionally, an aminoacyl-tRNA editing enzyme that deacylates mischarged D-aminoacyl-tRNAs. Also deacylates mischarged glycyl-tRNA(Ala), protecting cells against glycine mischarging by AlaRS. Acts via tRNA-based rather than protein-based catalysis; rejects L-amino acids rather than detecting D-amino acids in the active site. By recycling D-aminoacyl-tRNA to D-amino acids and free tRNA molecules, this enzyme counteracts the toxicity associated with the formation of D-aminoacyl-tRNA entities in vivo and helps enforce protein L-homochirality. In Pseudomonas fluorescens (strain SBW25), this protein is D-aminoacyl-tRNA deacylase.